We begin with the raw amino-acid sequence, 328 residues long: Ribosomal RNA large subunit methyltransferase F (328 aa).

The interval 1–31 (MTDTRKPPRKKPQRPAKPAAPREKATLHPRN) is disordered.

The protein belongs to the methyltransferase superfamily. METTL16/RlmF family.

It is found in the cytoplasm. It carries out the reaction adenosine(1618) in 23S rRNA + S-adenosyl-L-methionine = N(6)-methyladenosine(1618) in 23S rRNA + S-adenosyl-L-homocysteine + H(+). Its function is as follows. Specifically methylates the adenine in position 1618 of 23S rRNA. This is Ribosomal RNA large subunit methyltransferase F from Pseudomonas syringae pv. syringae (strain B728a).